A 414-amino-acid chain; its full sequence is MTEKLQPLRGMKDLLPDDYKVHDYIINKARDVGVLYGYKQMSTPLVEYTKVFNRSMGESSDVISKEIYSFLDKSNDFVALRPEFTACIIRSLISNRLQHKLPLKFFSTGPVFRYDRPQAGRQRQFHQLNYEYIGAKGAITDADTLKLAVDILKALEIEQDTTLELNSLGCNESRSVYQQKLVEYLNDFKDQLSEESKIRLSKNPMRILDSKSETDQKIIANAPVLSEYYTDESKEYFEELIQYLDILGMKYSINPRLVRGLDYYCHTAFEFTTKKLGSQSTILAGGRYDGLAKIMGNNDDVPAIGFAAGIERIALMREYNISEVKPVFVLPIGKNNICYALEIVDKLRTENIAIIIESLGKIAKRMQRIFNENAQFIIFIGDEEQANNNLKIKDLKKAEEYIVDFAKALELLKK.

Belongs to the class-II aminoacyl-tRNA synthetase family. As to quaternary structure, homodimer.

It is found in the cytoplasm. It catalyses the reaction tRNA(His) + L-histidine + ATP = L-histidyl-tRNA(His) + AMP + diphosphate + H(+). This Rickettsia africae (strain ESF-5) protein is Histidine--tRNA ligase.